The sequence spans 143 residues: Small ribosomal subunit protein eS12 (143 aa).

Belongs to the eukaryotic ribosomal protein eS12 family.

The sequence is that of Small ribosomal subunit protein eS12 (RPS12) from Hordeum vulgare (Barley).